We begin with the raw amino-acid sequence, 308 residues long: D-alanine--D-alanine ligase (308 aa).

One can recognise an ATP-grasp domain in the interval 102–302 (KHVAKAAGIP…FGEFLRWMVE (201 aa)). 128–183 (PMKPPYVVKPVREGSSFGVVIVKEDQSHPPQVITSSEWRYGDRVMVERYIAGREFT) contacts ATP. Mg(2+) contacts are provided by aspartate 252, glutamate 269, and asparagine 271.

The protein belongs to the D-alanine--D-alanine ligase family. Mg(2+) serves as cofactor. It depends on Mn(2+) as a cofactor.

Its subcellular location is the cytoplasm. The enzyme catalyses 2 D-alanine + ATP = D-alanyl-D-alanine + ADP + phosphate + H(+). The protein operates within cell wall biogenesis; peptidoglycan biosynthesis. In terms of biological role, cell wall formation. The polypeptide is D-alanine--D-alanine ligase (Rhizobium meliloti (strain 1021) (Ensifer meliloti)).